The chain runs to 216 residues: Probable disulfide bond formation protein D (216 aa).

The N-terminal stretch at 1 to 25 (MKSNKLMALGIVFSIAVLIVIGTIA) is a signal peptide. Cysteines 65 and 68 form a disulfide.

It belongs to the thioredoxin family. DsbA subfamily.

Its function is as follows. May be required for disulfide bond formation in some proteins. This chain is Probable disulfide bond formation protein D (bdbD), found in Bacillus cereus (strain ATCC 14579 / DSM 31 / CCUG 7414 / JCM 2152 / NBRC 15305 / NCIMB 9373 / NCTC 2599 / NRRL B-3711).